The sequence spans 285 residues: 1-acyl-sn-glycerol-3-phosphate acyltransferase alpha (285 aa).

The signal sequence occupies residues M1–S28. At A29–K34 the chain is on the lumenal side. Residues M35–V55 form a helical membrane-spanning segment. Topologically, residues R56–R124 are cytoplasmic. Positions H101–D106 match the HXXXXD motif motif. The helical transmembrane segment at E125–D145 threads the bilayer. Over R146–R189 the chain is Lumenal. An EGTR motif motif is present at residues E175 to R178.

The protein belongs to the 1-acyl-sn-glycerol-3-phosphate acyltransferase family. Widely expressed.

Its subcellular location is the endoplasmic reticulum membrane. It catalyses the reaction a 1-acyl-sn-glycero-3-phosphate + an acyl-CoA = a 1,2-diacyl-sn-glycero-3-phosphate + CoA. The enzyme catalyses 1-(9Z-octadecenoyl)-sn-glycero-3-phosphate + (9Z)-octadecenoyl-CoA = 1,2-di-(9Z-octadecenoyl)-sn-glycero-3-phosphate + CoA. It carries out the reaction 1-(9Z-octadecenoyl)-sn-glycero-3-phosphate + hexadecanoyl-CoA = 1-(9Z)-octadecenoyl-2-hexadecanoyl-sn-glycero-3-phosphate + CoA. The catalysed reaction is heptadecanoyl-CoA + 1-(9Z-octadecenoyl)-sn-glycero-3-phosphate = 1-(9Z)-octadecenoyl-2-heptadecanoyl-sn-glycero-3-phosphate + CoA. It catalyses the reaction 1-(9Z-octadecenoyl)-sn-glycero-3-phosphate + octadecanoyl-CoA = 1-(9Z-octadecenoyl)-2-octadecanoyl-sn-glycero-3-phosphate + CoA. The enzyme catalyses 1-(9Z-octadecenoyl)-sn-glycero-3-phosphate + (9Z,12Z)-octadecadienoyl-CoA = 1-(9Z)-octadecenoyl-2-(9Z,12Z)-octadecadienoyl-sn-glycero-3-phosphate + CoA. It carries out the reaction 1-(9Z-octadecenoyl)-sn-glycero-3-phosphate + tetradecanoyl-CoA = 1-(9Z)-octadecenoyl-2-tetradecanoyl-sn-glycero-3-phosphate + CoA. The catalysed reaction is pentadecanoyl-CoA + 1-(9Z-octadecenoyl)-sn-glycero-3-phosphate = 1-(9Z)-octadecenoyl-2-pentadecanoyl-sn-glycero-3-phosphate + CoA. It catalyses the reaction 1-hexadecanoyl-sn-glycero-3-phosphate + (9Z)-octadecenoyl-CoA = 1-hexadecanoyl-2-(9Z-octadecenoyl)-sn-glycero-3-phosphate + CoA. The enzyme catalyses 1-(9Z,12Z,15Z)-octadecatrienoyl-sn-glycero-3-phosphate + (9Z)-octadecenoyl-CoA = 1-(9Z,12Z,15Z)-octadecatrienoyl-2-(9Z)-octadecenoyl-sn-glycero-3-phosphate + CoA. It carries out the reaction 1-(6Z,9Z,12Z-octadecatrienoyl)-sn-glycero-3-phosphate + (9Z)-octadecenoyl-CoA = (6Z,9Z,12Z)-octadecatrienoyl-2-(9Z)-octadecenoyl-sn-glycero-3-phosphate + CoA. The catalysed reaction is 1-eicosanoyl-sn-glycero-3-phosphate + (9Z)-octadecenoyl-CoA = 1-eicosanoyl-2-(9Z)-octadecenoyl-sn-glycero-3-phosphate + CoA. It catalyses the reaction 1-tetradecanoyl-sn-glycerol 3-phosphate + (9Z)-octadecenoyl-CoA = 1-tetradecanoyl-2-(9Z)-octadecenoyl-sn-glycero-3-phosphate + CoA. The enzyme catalyses 1-(9Z-octadecenoyl)-sn-glycero-3-phosphate + (5Z,8Z,11Z,14Z)-eicosatetraenoyl-CoA = 1-(9Z)-octadecenoyl-2-(5Z,8Z,11Z,14Z)-eicosatetraenoyl-sn-glycero-3-phosphate + CoA. It carries out the reaction 1-(9Z-octadecenoyl)-sn-glycero-3-phosphate + dodecanoyl-CoA = 1-(9Z)-octadecenoyl-2-dodecanoyl-sn-glycero-3-phosphate + CoA. The catalysed reaction is (6Z)-octadecenoyl-CoA + 1-(9Z-octadecenoyl)-sn-glycero-3-phosphate = 1-(9Z)-octadecenoyl-2-(6Z)-octadecenoyl-sn-glycero-3-phosphate + CoA. It catalyses the reaction (11Z)-octadecenoyl-CoA + 1-(9Z-octadecenoyl)-sn-glycero-3-phosphate = 1-(9Z)-octadecenoyl-2-(11Z)-octadecenoyl-sn-glycero-3-phosphate + CoA. The enzyme catalyses (9Z)-hexadecenoyl-CoA + 1-(9Z-octadecenoyl)-sn-glycero-3-phosphate = 1-(9Z-octadecenoyl)-2-(9Z-hexadecenoyl)-sn-glycero-3-phosphate + CoA. It participates in phospholipid metabolism; CDP-diacylglycerol biosynthesis; CDP-diacylglycerol from sn-glycerol 3-phosphate: step 2/3. Its function is as follows. Converts 1-acyl-sn-glycerol-3-phosphate (lysophosphatidic acid or LPA) into 1,2-diacyl-sn-glycerol-3-phosphate (phosphatidic acid or PA) by incorporating an acyl moiety at the sn-2 position of the glycerol backbone. This chain is 1-acyl-sn-glycerol-3-phosphate acyltransferase alpha (Agpat1), found in Mus musculus (Mouse).